The chain runs to 549 residues: Glucose-6-phosphate isomerase (549 aa).

The Proton donor role is filled by Glu-355. Active-site residues include His-386 and Lys-514.

This sequence belongs to the GPI family.

It localises to the cytoplasm. It carries out the reaction alpha-D-glucose 6-phosphate = beta-D-fructose 6-phosphate. It functions in the pathway carbohydrate biosynthesis; gluconeogenesis. The protein operates within carbohydrate degradation; glycolysis; D-glyceraldehyde 3-phosphate and glycerone phosphate from D-glucose: step 2/4. In terms of biological role, catalyzes the reversible isomerization of glucose-6-phosphate to fructose-6-phosphate. This is Glucose-6-phosphate isomerase from Pectobacterium carotovorum subsp. carotovorum (strain PC1).